The chain runs to 106 residues: Large ribosomal subunit protein P2 (106 aa).

Residues 80-106 form a disordered region; the sequence is AAAAPAKKVVEEKKEESDDDMGMGLFD.

Belongs to the eukaryotic ribosomal protein P1/P2 family. As to quaternary structure, P1 and P2 exist as dimers at the large ribosomal subunit. Phosphorylated.

Plays an important role in the elongation step of protein synthesis. The protein is Large ribosomal subunit protein P2 (rplp2) of Dictyostelium discoideum (Social amoeba).